A 334-amino-acid chain; its full sequence is Leucine-rich repeat-containing protein 39 (334 aa).

Positions 10-47 (AVNAVKEVWEKRIKKLNEDLKREKEFQQKLVRIWEERV) form a coiled coil. LRR repeat units follow at residues 84–105 (QLQE…IGRF), 107–128 (NLIV…IGLL), 130–151 (RLQE…LSYC), 153–176 (SLEK…SNLL), 177–198 (KLTH…VLNM), 200–221 (ALEW…IERM), 223–244 (NLHT…ISSM), 246–267 (NLST…MEKM), and 269–290 (NLRF…PPSE).

Interacts with MYH7 (via C-terminus).

The protein resides in the cytoplasm. It localises to the myofibril. Its subcellular location is the sarcomere. It is found in the m line. Component of the sarcomeric M-band which plays a role in myocyte response to biomechanical stress. May regulate expression of other M-band proteins via an SRF-dependent pathway. Important for normal contractile function in heart. The chain is Leucine-rich repeat-containing protein 39 from Bos taurus (Bovine).